Here is a 77-residue protein sequence, read N- to C-terminus: Acyl carrier protein (77 aa).

A Carrier domain is found at 2–77 (SDIADRVKKI…DAVKFISEAA (76 aa)). Ser37 carries the post-translational modification O-(pantetheine 4'-phosphoryl)serine.

It belongs to the acyl carrier protein (ACP) family. In terms of processing, 4'-phosphopantetheine is transferred from CoA to a specific serine of apo-ACP by AcpS. This modification is essential for activity because fatty acids are bound in thioester linkage to the sulfhydryl of the prosthetic group.

The protein resides in the cytoplasm. Its pathway is lipid metabolism; fatty acid biosynthesis. Functionally, carrier of the growing fatty acid chain in fatty acid biosynthesis. In Cereibacter sphaeroides (strain ATCC 17029 / ATH 2.4.9) (Rhodobacter sphaeroides), this protein is Acyl carrier protein.